Consider the following 185-residue polypeptide: Regulatory protein RecX (185 aa).

Belongs to the RecX family.

It localises to the cytoplasm. Functionally, modulates RecA activity. The chain is Regulatory protein RecX from Thermobifida fusca (strain YX).